Consider the following 257-residue polypeptide: Snake venom serine protease BITS01A (257 aa).

Residues 1 to 18 (MVLIRVIANLLILQVSYA) form the signal peptide. A propeptide spanning residues 19–24 (QKSSEL) is cleaved from the precursor. A Peptidase S1 domain is found at 25-248 (VVGGDECDIN…YLPWIQSIIA (224 aa)). Intrachain disulfides connect Cys31-Cys162, Cys49-Cys65, Cys97-Cys255, Cys141-Cys209, Cys173-Cys188, and Cys199-Cys224. His64 serves as the catalytic Charge relay system. An N-linked (GlcNAc...) asparagine glycan is attached at Asn101. Asp109 functions as the Charge relay system in the catalytic mechanism. N-linked (GlcNAc...) asparagine glycans are attached at residues Asn121, Asn153, and Asn169. Ser203 functions as the Charge relay system in the catalytic mechanism. 2 N-linked (GlcNAc...) asparagine glycosylation sites follow: Asn210 and Asn250.

The protein belongs to the peptidase S1 family. Snake venom subfamily. As to quaternary structure, monomer. Expressed by the venom gland.

The protein localises to the secreted. Functionally, snake venom serine protease that may act in the hemostasis system of the prey. In Bothrops insularis (Golden lancehead), this protein is Snake venom serine protease BITS01A.